Here is a 515-residue protein sequence, read N- to C-terminus: 2-isopropylmalate synthase (515 aa).

The 261-residue stretch at 4 to 264 folds into the Pyruvate carboxyltransferase domain; it reads VKIFDTTLRD…NIGINQDTTQ (261 aa). Mn(2+) contacts are provided by Asp-13, His-201, His-203, and Asn-237. The tract at residues 390–515 is regulatory domain; sequence ELDYLSVNTG…RQTTSAQEGI (126 aa).

Belongs to the alpha-IPM synthase/homocitrate synthase family. LeuA type 1 subfamily. Homodimer. Requires Mn(2+) as cofactor.

It localises to the cytoplasm. It catalyses the reaction 3-methyl-2-oxobutanoate + acetyl-CoA + H2O = (2S)-2-isopropylmalate + CoA + H(+). The protein operates within amino-acid biosynthesis; L-leucine biosynthesis; L-leucine from 3-methyl-2-oxobutanoate: step 1/4. In terms of biological role, catalyzes the condensation of the acetyl group of acetyl-CoA with 3-methyl-2-oxobutanoate (2-ketoisovalerate) to form 3-carboxy-3-hydroxy-4-methylpentanoate (2-isopropylmalate). In Halothermothrix orenii (strain H 168 / OCM 544 / DSM 9562), this protein is 2-isopropylmalate synthase.